The primary structure comprises 639 residues: Transcription factor phomR' (639 aa).

A DNA-binding region (zn(2)-C6 fungal-type) is located at residues cysteine 14–cysteine 41. Disordered regions lie at residues arginine 58–glycine 136 and leucine 476–glutamate 499. Residues serine 68–serine 108 are compositionally biased toward low complexity.

The protein localises to the nucleus. In terms of biological role, transcription factor; part of the gene cluster that mediates the biosynthesis of the phomopsins, a group of hexapeptide mycotoxins which infects lupins and causes lupinosis disease in livestock. May play a role in the regulation of the production of phomopsins. This is Transcription factor phomR' from Diaporthe leptostromiformis (Lupinosis disease fungus).